Consider the following 1067-residue polypeptide: MSSQNSFMSSKKDDKGKNIQVVVRCRPFNQLERKASSHSVLECDAPRKEVCVRTGGINDKLGKKTYTFDMVFGPAAKQIDVYRSVVCPILDEVIMGYNCTVFAYGQTGTGKTFTMEGERSADEEFTWEQDPLAGIIPRTLHQIFEKLSENGTEFSVKVSLLEIYNEELFDLLSPSPDVGERLQMFDDPRNKRGVIIKGLEEVSVHNKDEVYHILERGAARRKTASTLMNAYSSRSHSVFSVTIHMKETTVDGEELVKIGKLNLVDLAGSENIGRSGAVDKRAREAGNINQSLLTLGRVITALVERAPHIPYRESKLTRILQDSLGGRTKTSIIATVSPASINLEETVSTLEYANRAKNIMNKPEVNQKLTKRALIKEYTEEIERLKRDLATAREKNGVYLSNENYEQLQGKVLSQEEIITEYTEKITAMEEEIKRINELFAENKKELEECTTILQCKEKELEETQKNLHESKEQLAQEAFVVTALETTEKKLHGTANKLLTTVRETSKDVSGLHAKLDRKRAVDQHNTQVHENFAEQMDKRFSVIERSVDEYSVKQQGMLDFYTNSIDNLLGASSAALSVTATAVAKSFTSVQETVSEKVSHSVDEILKQETLSSQAKDDLQKLMAAHRTGLEQALRTDLLPVVTAVLNLNSHLSHCLQNFQAVADKIDSHKEEMNSFFTEHSRSLHRLRLDSGSALSSIQSEYESLKVEIETAQSMHSEGVNNLIGSLQNQLNLLAMETQQNFSGFLAKGGKLQKSVGCLQQDLDSISSDAIEHTSSHHDKFAGQSQDIAVEIRQLAASNMGTLEESSKQCEKLTGSINAISRESQHWCESASQQIDSLLEEQVCYLRTSKKHLQSLQKDVEVGCGASVVEITEHVNAQRQAEEKALTSLVEQVRDDKEMLGEQRLELHEQVQSGQNKVNSYLNEELRNDVPTGTTPQRRDYVYPSLLVRTKPRDVLLEQFRQQQQEYLESISSVISEAVEPPVEQDSLEDEPPVAVNDSVMSEKSCIDLSMVCQENGGVPFFQQKKALRKEKENRANTTLLERSKIMDEAEQSLPKSKLPLRMQN.

The 342-residue stretch at 18 to 359 (NIQVVVRCRP…LEYANRAKNI (342 aa)) folds into the Kinesin motor domain. 105–112 (GQTGTGKT) contacts ATP. A coiled-coil region spans residues 365 to 480 (VNQKLTKRAL…SKEQLAQEAF (116 aa)). T937 is modified (phosphothreonine; by CDK1). The residue at position 1046 (S1046) is a Phosphoserine; by NEK6. Residues 1048–1067 (IMDEAEQSLPKSKLPLRMQN) form a disordered region.

This sequence belongs to the TRAFAC class myosin-kinesin ATPase superfamily. Kinesin family. BimC subfamily. As to quaternary structure, heterotetramer of two heavy and two light chains. Interacts with aurka. Post-translationally, phosphorylation of Thr-937 during mitosis controls the association of this protein with the spindle apparatus. A subset of this protein primarily localized at the spindle pole is phosphorylated by NEK6 during mitosis. In terms of processing, phosphorylated on a serine residue by aurka.

It localises to the cytoplasm. Its subcellular location is the cytoskeleton. The protein resides in the spindle pole. Plus end-directed motor protein required for establishing a bipolar spindle. Associates with both interphase and mitotic spindle microtubules. May be involved in nuclear divisions taking place during the development of unfertilized eggs. Required in non-mitotic cells for transport of secretory proteins from the Golgi complex to the cell surface. This chain is Kinesin-like protein KIF11, found in Xenopus tropicalis (Western clawed frog).